Consider the following 96-residue polypeptide: UPF0235 protein Shewmr4_1190 (96 aa).

It belongs to the UPF0235 family.

This Shewanella sp. (strain MR-4) protein is UPF0235 protein Shewmr4_1190.